Reading from the N-terminus, the 245-residue chain is tRNA1(Val) (adenine(37)-N6)-methyltransferase (245 aa).

The protein belongs to the methyltransferase superfamily. tRNA (adenine-N(6)-)-methyltransferase family.

Its subcellular location is the cytoplasm. It carries out the reaction adenosine(37) in tRNA1(Val) + S-adenosyl-L-methionine = N(6)-methyladenosine(37) in tRNA1(Val) + S-adenosyl-L-homocysteine + H(+). In terms of biological role, specifically methylates the adenine in position 37 of tRNA(1)(Val) (anticodon cmo5UAC). This Escherichia coli O6:K15:H31 (strain 536 / UPEC) protein is tRNA1(Val) (adenine(37)-N6)-methyltransferase.